A 130-amino-acid chain; its full sequence is Small ribosomal subunit protein uS9 (130 aa).

This sequence belongs to the universal ribosomal protein uS9 family.

The protein is Small ribosomal subunit protein uS9 of Desulfovibrio desulfuricans (strain ATCC 27774 / DSM 6949 / MB).